Here is a 182-residue protein sequence, read N- to C-terminus: Ribulose bisphosphate carboxylase small subunit, chloroplastic 4 (182 aa).

Residues 1-41 (MSAAMMNKSVVLSKQCTKPAATPKVVTSKRSFASTVANKNR) constitute a chloroplast transit peptide.

This sequence belongs to the RuBisCO small chain family. In terms of assembly, heterohexadecamer of 8 large and 8 small subunits.

The protein localises to the plastid. It localises to the chloroplast. Its function is as follows. RuBisCO catalyzes two reactions: the carboxylation of D-ribulose 1,5-bisphosphate, the primary event in carbon dioxide fixation, as well as the oxidative fragmentation of the pentose substrate. Both reactions occur simultaneously and in competition at the same active site. Although the small subunit is not catalytic it is essential for maximal activity. In Acetabularia acetabulum (Mermaid's wine glass), this protein is Ribulose bisphosphate carboxylase small subunit, chloroplastic 4.